The following is a 527-amino-acid chain: Glucose-6-phosphate isomerase (527 aa).

E323 functions as the Proton donor in the catalytic mechanism. Catalysis depends on residues H352 and K454.

This sequence belongs to the GPI family.

The protein localises to the cytoplasm. It carries out the reaction alpha-D-glucose 6-phosphate = beta-D-fructose 6-phosphate. It participates in carbohydrate biosynthesis; gluconeogenesis. Its pathway is carbohydrate degradation; glycolysis; D-glyceraldehyde 3-phosphate and glycerone phosphate from D-glucose: step 2/4. In terms of biological role, catalyzes the reversible isomerization of glucose-6-phosphate to fructose-6-phosphate. This chain is Glucose-6-phosphate isomerase, found in Prochlorococcus marinus (strain MIT 9312).